Consider the following 213-residue polypeptide: Iron sulfur cluster assembly protein 1, mitochondrial (213 aa).

This sequence belongs to the NifU family. In terms of assembly, component of the core Fe-S cluster (ISC) assembly machinery. The cofactor is [2Fe-2S] cluster.

The protein resides in the mitochondrion matrix. The protein operates within cofactor biosynthesis; iron-sulfur cluster biosynthesis. Its function is as follows. Scaffold protein for the de novo synthesis of iron-sulfur (Fe-S) clusters within mitochondria, which is required for maturation of both mitochondrial and cytoplasmic [2Fe-2S] and [4Fe-4S] proteins. First, a [2Fe-2S] cluster is transiently assembled on the scaffold protein ISU1. In a second step, the cluster is released from ISU1, transferred to a glutaredoxin, followed by the formation of mitochondrial [2Fe-2S] proteins, the synthesis of [4Fe-4S] clusters and their target-specific insertion into the recipient apoproteins. Cluster assembly on ISU1 depends on the function of the cysteine desulfurase complex NFS1-ISD11, which serves as the sulfur donor for cluster synthesis, the iron-binding protein frataxin as the putative iron donor, and the electron transfer chain comprised of ferredoxin reductase and ferredoxin, which receive their electrons from NADH. In Candida glabrata (strain ATCC 2001 / BCRC 20586 / JCM 3761 / NBRC 0622 / NRRL Y-65 / CBS 138) (Yeast), this protein is Iron sulfur cluster assembly protein 1, mitochondrial (ISU1).